We begin with the raw amino-acid sequence, 142 residues long: Profilin (142 aa).

This sequence belongs to the profilin family. As to quaternary structure, occurs in many kinds of cells as a complex with monomeric actin in a 1:1 ratio. Expressed specifically in coelomocytes in response to injury.

It localises to the cytoplasm. Its subcellular location is the cytoskeleton. Binds to actin and affects the structure of the cytoskeleton. At high concentrations, profilin prevents the polymerization of actin, whereas it enhances it at low concentrations. By binding to PIP2, it inhibits the formation of IP3 and DG. The chain is Profilin from Strongylocentrotus purpuratus (Purple sea urchin).